The sequence spans 394 residues: Elongation factor Tu (394 aa).

One can recognise a tr-type G domain in the interval K10–E205. Residues G19–T26 form a G1 region. GTP is bound at residue G19–T26. T26 lines the Mg(2+) pocket. A G2 region spans residues G61 to N65. The G3 stretch occupies residues D82 to G85. Residues D82 to H86 and N137 to D140 contribute to the GTP site. The tract at residues N137–D140 is G4. A G5 region spans residues S173–F175.

Belongs to the TRAFAC class translation factor GTPase superfamily. Classic translation factor GTPase family. EF-Tu/EF-1A subfamily. As to quaternary structure, monomer.

Its subcellular location is the cytoplasm. It carries out the reaction GTP + H2O = GDP + phosphate + H(+). Functionally, GTP hydrolase that promotes the GTP-dependent binding of aminoacyl-tRNA to the A-site of ribosomes during protein biosynthesis. This Borrelia hermsii (strain HS1 / DAH) protein is Elongation factor Tu.